The following is a 653-amino-acid chain: Multidomain regulatory protein Rv1364c (653 aa).

2 positions are modified to phosphothreonine; by PknD: T54 and T81. The PAC domain occupies 86–142; sequence SGSEWRLQTDYDGSGVEERYFDFVVTPRRRADGSIEGVQLIVDDVTSRVRARQAAEA. One can recognise a PPM-type phosphatase domain in the interval 177–396; it reads DIAAEYLVAA…DDVTLLAMQR (220 aa). 2 residues coordinate Mn(2+): D211 and V212. Position 299 is a phosphothreonine; by PknD (T299). Positions 328 and 387 each coordinate Mn(2+). T390 carries the post-translational modification Phosphothreonine; by PknD. The interval 397 to 544 is anti-sigma factor kinase region; sequence RAPTPPLHIT…TMVRRAAFQQ (148 aa). Position 506 is a phosphoserine; by PknD (S506). A phosphothreonine; by PknD mark is found at T520 and T568. Positions 546–653 constitute an STAS domain; it reads IDSEFVSLVE…ADTEDIFAQE (108 aa). S600 carries the post-translational modification Phosphoserine; by autocatalysis.

Exists in solution as both monomer and dimer. Both the phosphorylated and unphosphorylated proteins form extended dimers. Interacts with SigF. Can efficiently bind to SigF independently of its autophosphorylation. Interaction between SigF and Rv1364c is reduced significantly upon the phosphorylation of both proteins by PknD. Mn(2+) serves as cofactor. The cofactor is Mg(2+). Autophosphorylated. Phosphorylated by PknD on multiple threonine and serine residues. Phosphorylation is antagonized by the phosphatase activity.

It catalyses the reaction O-phospho-L-seryl-[protein] + H2O = L-seryl-[protein] + phosphate. It carries out the reaction O-phospho-L-threonyl-[protein] + H2O = L-threonyl-[protein] + phosphate. The catalysed reaction is L-seryl-[protein] + ATP = O-phospho-L-seryl-[protein] + ADP + H(+). The enzyme catalyses L-threonyl-[protein] + ATP = O-phospho-L-threonyl-[protein] + ADP + H(+). Its activity is regulated as follows. The phosphatase domain is activated by the anti-sigma factor kinase domain. Functionally, primarily acts as an independent SigF regulator that is sensitive to the osmosensory signal, mediating the cross talk of PknD with the SigF regulon. Possesses both phosphatase and kinase activities. The kinase domain functions as a classic anti-sigma factor-like kinase to phosphorylate the anti-anti-sigma factor domain at the canonical regulatory site, and the phosphatase domain antagonizes this activity. The chain is Multidomain regulatory protein Rv1364c from Mycobacterium tuberculosis (strain ATCC 25618 / H37Rv).